The sequence spans 549 residues: Phosphoenolpyruvate carboxykinase (ATP) (549 aa).

Position 250-257 (250-257) interacts with ATP; it reads GLSGTGKT.

It belongs to the phosphoenolpyruvate carboxykinase (ATP) family. Homotetramer.

The enzyme catalyses oxaloacetate + ATP = phosphoenolpyruvate + ADP + CO2. It functions in the pathway carbohydrate biosynthesis; gluconeogenesis. This Saccharomyces cerevisiae (strain ATCC 204508 / S288c) (Baker's yeast) protein is Phosphoenolpyruvate carboxykinase (ATP) (PCK1).